The following is a 125-amino-acid chain: Small ribosomal subunit protein uS13 (125 aa).

The segment at 97–125 (PLRGQRTKTNARTRKGKRKTVANKKMASK) is disordered.

This sequence belongs to the universal ribosomal protein uS13 family. Part of the 30S ribosomal subunit. Forms a loose heterodimer with protein S19. Forms two bridges to the 50S subunit in the 70S ribosome.

Functionally, located at the top of the head of the 30S subunit, it contacts several helices of the 16S rRNA. In the 70S ribosome it contacts the 23S rRNA (bridge B1a) and protein L5 of the 50S subunit (bridge B1b), connecting the 2 subunits; these bridges are implicated in subunit movement. Contacts the tRNAs in the A and P-sites. The protein is Small ribosomal subunit protein uS13 of Borrelia hermsii (strain HS1 / DAH).